We begin with the raw amino-acid sequence, 158 residues long: C-type lectin BfL-2 (158 aa).

The first 21 residues, methionine 1–alanine 21, serve as a signal peptide directing secretion. 4 disulfide bridges follow: cysteine 26–cysteine 37, cysteine 54–cysteine 154, cysteine 61–cysteine 156, and cysteine 129–cysteine 146. The 123-residue stretch at lysine 33–glutamine 155 folds into the C-type lectin domain. The Mannose-binding signature appears at glutamate 119 to asparagine 121. Residue asparagine 121 is glycosylated (N-linked (GlcNAc...) asparagine). Positions 127, 142, and 143 each coordinate Ca(2+).

The protein belongs to the true venom lectin family. In terms of assembly, homodimer; non-covalently linked. Expressed by the venom gland.

It localises to the secreted. Mannose-binding lectin which recognizes specific carbohydrate structures and agglutinates a variety of animal cells by binding to cell-surface glycoproteins and glycolipids. May be a calcium-dependent lectin. This is C-type lectin BfL-2 from Bungarus fasciatus (Banded krait).